The chain runs to 116 residues: U16-barytoxin-Tl1a (116 aa).

The first 20 residues, 1–20 (MKTIIVFLSLLVLATKFGDA), serve as a signal peptide directing secretion. A propeptide spanning residues 21 to 74 (KEGVNQEQKKEVTQNEFRVEYLNEMAAMSLLQQLEAIESALFEKEAGRNSRQKR) is cleaved from the precursor. Cystine bridges form between cysteine 75/cysteine 90, cysteine 82/cysteine 95, and cysteine 89/cysteine 110.

It belongs to the neurotoxin 14 (magi-1) family. 06 (ICK-Trit) subfamily. Expressed by the venom gland.

Its subcellular location is the secreted. Its function is as follows. Ion channel inhibitor. This is U16-barytoxin-Tl1a from Trittame loki (Brush-footed trapdoor spider).